The chain runs to 320 residues: tRNA uridine(34) hydroxylase (320 aa).

Residues 123-217 form the Rhodanese domain; sequence EDENTVILDA…YGKDPETKGQ (95 aa). Cysteine 177 serves as the catalytic Cysteine persulfide intermediate.

This sequence belongs to the TrhO family.

The catalysed reaction is uridine(34) in tRNA + AH2 + O2 = 5-hydroxyuridine(34) in tRNA + A + H2O. Catalyzes oxygen-dependent 5-hydroxyuridine (ho5U) modification at position 34 in tRNAs. This is tRNA uridine(34) hydroxylase from Staphylococcus epidermidis (strain ATCC 12228 / FDA PCI 1200).